The sequence spans 222 residues: uncharacterized protein (222 aa).

This is an uncharacterized protein from Homo sapiens (Human).